The following is a 196-amino-acid chain: Putative NADH dehydrogenase/NAD(P)H nitroreductase Reut_A1586 (196 aa).

This sequence belongs to the nitroreductase family. HadB/RutE subfamily. FMN is required as a cofactor.

This chain is Putative NADH dehydrogenase/NAD(P)H nitroreductase Reut_A1586, found in Cupriavidus pinatubonensis (strain JMP 134 / LMG 1197) (Cupriavidus necator (strain JMP 134)).